Consider the following 559-residue polypeptide: Glutamine--tRNA ligase (559 aa).

The 'HIGH' region signature appears at 36 to 46 (PEPNGYLHLGH). Residues 37 to 39 (EPN) and 43 to 49 (HLGHAKS) each bind ATP. L-glutamine-binding residues include D69 and Y214. ATP contacts are provided by residues T233, 263 to 264 (RL), and 271 to 273 (LSK). Residues 270 to 274 (LLSKR) carry the 'KMSKS' region motif.

Belongs to the class-I aminoacyl-tRNA synthetase family. In terms of assembly, monomer.

Its subcellular location is the cytoplasm. The catalysed reaction is tRNA(Gln) + L-glutamine + ATP = L-glutaminyl-tRNA(Gln) + AMP + diphosphate. The protein is Glutamine--tRNA ligase of Nitrobacter winogradskyi (strain ATCC 25391 / DSM 10237 / CIP 104748 / NCIMB 11846 / Nb-255).